The following is a 427-amino-acid chain: 3-phosphoshikimate 1-carboxyvinyltransferase (427 aa).

3-phosphoshikimate-binding residues include lysine 20, serine 21, and arginine 25. Phosphoenolpyruvate is bound at residue lysine 20. Residues glycine 92 and arginine 120 each coordinate phosphoenolpyruvate. Positions 166, 168, 312, and 339 each coordinate 3-phosphoshikimate. A phosphoenolpyruvate-binding site is contributed by glutamine 168. The active-site Proton acceptor is aspartate 312. Phosphoenolpyruvate contacts are provided by arginine 343 and arginine 385.

This sequence belongs to the EPSP synthase family. Monomer.

Its subcellular location is the cytoplasm. It carries out the reaction 3-phosphoshikimate + phosphoenolpyruvate = 5-O-(1-carboxyvinyl)-3-phosphoshikimate + phosphate. Its pathway is metabolic intermediate biosynthesis; chorismate biosynthesis; chorismate from D-erythrose 4-phosphate and phosphoenolpyruvate: step 6/7. In terms of biological role, catalyzes the transfer of the enolpyruvyl moiety of phosphoenolpyruvate (PEP) to the 5-hydroxyl of shikimate-3-phosphate (S3P) to produce enolpyruvyl shikimate-3-phosphate and inorganic phosphate. This is 3-phosphoshikimate 1-carboxyvinyltransferase from Streptococcus agalactiae serotype Ia (strain ATCC 27591 / A909 / CDC SS700).